The primary structure comprises 869 residues: Eukaryotic translation initiation factor 3 subunit C (869 aa).

Disordered regions lie at residues 1-92 (MSRF…KSAK) and 182-242 (IKKA…VGKG). Acidic residues predominate over residues 14 to 55 (SSDEEEDLYSDDEEVQEQPEEESSEDDSEEDDDDDDDSDSSS). Residues 185 to 203 (ASKEHQKDIDSFRADKDAY) show a composition bias toward basic and acidic residues. A PCI domain is found at 607–781 (FHMHINLELL…SSIIFRKGVE (175 aa)). Residues 803–869 (NERTLETRTQ…ALGAAVGSRA (67 aa)) form a disordered region. Positions 823–843 (GRGGRGGNRGGRGGGRGGRGG) are enriched in gly residues.

This sequence belongs to the eIF-3 subunit C family. In terms of assembly, component of the eukaryotic translation initiation factor 3 (eIF-3) complex.

The protein localises to the cytoplasm. In terms of biological role, component of the eukaryotic translation initiation factor 3 (eIF-3) complex, which is involved in protein synthesis of a specialized repertoire of mRNAs and, together with other initiation factors, stimulates binding of mRNA and methionyl-tRNAi to the 40S ribosome. The eIF-3 complex specifically targets and initiates translation of a subset of mRNAs involved in cell proliferation. The chain is Eukaryotic translation initiation factor 3 subunit C (nip1) from Botryotinia fuckeliana (strain B05.10) (Noble rot fungus).